Consider the following 542-residue polypeptide: Nif-specific regulatory protein (542 aa).

In terms of domain architecture, GAF spans 29–170 (DLSKTLREVL…MVANLIGQTV (142 aa)). The Sigma-54 factor interaction domain maps to 203 to 432 (VIGISKAMQE…LENCVERTAT (230 aa)). Residues 231-238 (GESGTGKE) and 294-303 (AHGGTLFLDE) contribute to the ATP site. The interval 433-499 (MMRGDLITEV…ATGAAPPTSE (67 aa)) is inter-domain linker. The a divalent metal cation site is built by Cys-446 and Cys-451. A C-terminal DNA-binding domain region spans residues 500–542 (RERLIWAMEQCGWVQAKAARALNISPRQMGYALQKFNIEVKKF). Positions 514–533 (QAKAARALNISPRQMGYALQ) form a DNA-binding region, H-T-H motif.

In terms of assembly, interacts with sigma-54.

Its function is as follows. Required for activation of most nif operons, which are directly involved in nitrogen fixation. The polypeptide is Nif-specific regulatory protein (nifA) (Herbaspirillum seropedicae).